The sequence spans 147 residues: uncharacterized protein (147 aa).

A helical transmembrane segment spans residues 13-35; it reads NSRINLLGILVLNVVCGKSSIFF.

Its subcellular location is the membrane. This is an uncharacterized protein from Saccharomyces cerevisiae (strain ATCC 204508 / S288c) (Baker's yeast).